The primary structure comprises 271 residues: 2,3,4,5-tetrahydropyridine-2,6-dicarboxylate N-succinyltransferase (271 aa).

Belongs to the transferase hexapeptide repeat family.

It localises to the cytoplasm. The catalysed reaction is (S)-2,3,4,5-tetrahydrodipicolinate + succinyl-CoA + H2O = (S)-2-succinylamino-6-oxoheptanedioate + CoA. Its pathway is amino-acid biosynthesis; L-lysine biosynthesis via DAP pathway; LL-2,6-diaminopimelate from (S)-tetrahydrodipicolinate (succinylase route): step 1/3. The sequence is that of 2,3,4,5-tetrahydropyridine-2,6-dicarboxylate N-succinyltransferase from Coxiella burnetii (strain CbuG_Q212) (Coxiella burnetii (strain Q212)).